Here is a 98-residue protein sequence, read N- to C-terminus: NADH-ubiquinone oxidoreductase chain 4L (98 aa).

Transmembrane regions (helical) follow at residues 1–21 (MTSINLNLMTAFLLALAGVLM), 28–48 (STLLCLEGMMLSLYIMLSLLI), and 59–79 (APLILLVISACEAAGGLALLV).

It belongs to the complex I subunit 4L family. As to quaternary structure, core subunit of respiratory chain NADH dehydrogenase (Complex I) which is composed of 45 different subunits.

Its subcellular location is the mitochondrion inner membrane. The catalysed reaction is a ubiquinone + NADH + 5 H(+)(in) = a ubiquinol + NAD(+) + 4 H(+)(out). Its function is as follows. Core subunit of the mitochondrial membrane respiratory chain NADH dehydrogenase (Complex I) which catalyzes electron transfer from NADH through the respiratory chain, using ubiquinone as an electron acceptor. Part of the enzyme membrane arm which is embedded in the lipid bilayer and involved in proton translocation. The sequence is that of NADH-ubiquinone oxidoreductase chain 4L (MT-ND4L) from Phascolarctos cinereus (Koala).